A 124-amino-acid chain; its full sequence is MVKLTSIAAGVAAIAAGIAAAPATTTLSPSDERVNLVELGVYVSDIRAHLAQYYLFQAAHPTETYPVEIAEAVFNYGDFTTMLTGIPAEQVTRVITGVPWYSTRLRPAISSALSKDGIYTAIPK.

The chain crosses the membrane as a helical span at residues 7–24 (IAAGVAAIAAGIAAAPAT).

The protein belongs to the SRP1/TIP1 family. Seripauperin subfamily.

The protein resides in the membrane. The sequence is that of Seripauperin-3 (PAU3) from Saccharomyces cerevisiae (strain ATCC 204508 / S288c) (Baker's yeast).